A 103-amino-acid chain; its full sequence is Large ribosomal subunit protein uL24 (103 aa).

This sequence belongs to the universal ribosomal protein uL24 family. As to quaternary structure, part of the 50S ribosomal subunit.

Its function is as follows. One of two assembly initiator proteins, it binds directly to the 5'-end of the 23S rRNA, where it nucleates assembly of the 50S subunit. One of the proteins that surrounds the polypeptide exit tunnel on the outside of the subunit. The polypeptide is Large ribosomal subunit protein uL24 (Glaesserella parasuis serovar 5 (strain SH0165) (Haemophilus parasuis)).